The primary structure comprises 118 residues: Ribonuclease P protein component (118 aa).

This sequence belongs to the RnpA family. As to quaternary structure, consists of a catalytic RNA component (M1 or rnpB) and a protein subunit.

It carries out the reaction Endonucleolytic cleavage of RNA, removing 5'-extranucleotides from tRNA precursor.. Functionally, RNaseP catalyzes the removal of the 5'-leader sequence from pre-tRNA to produce the mature 5'-terminus. It can also cleave other RNA substrates such as 4.5S RNA. The protein component plays an auxiliary but essential role in vivo by binding to the 5'-leader sequence and broadening the substrate specificity of the ribozyme. This is Ribonuclease P protein component from Rickettsia typhi (strain ATCC VR-144 / Wilmington).